A 519-amino-acid chain; its full sequence is Golgi-associated kinase 1B (519 aa).

Over 1 to 37 the chain is Cytoplasmic; the sequence is MTCPDKPGQLINWFICSLCVPRVRKLWSSRRPRTRRN. Residues 38–55 traverse the membrane as a helical; Signal-anchor for type II membrane protein segment; that stretch reads LLLGTACAIYLGFLVSQV. At 56–519 the chain is on the extracellular side; the sequence is GRASLQHGQA…HGVKVLPMNE (464 aa). The tract at residues 62–103 is disordered; the sequence is HGQAAEKGPHRSRDTAEPSFPEIPLDGTLAPPESQGNGSTLQ. A compositionally biased stretch (basic and acidic residues) spans 68–77; that stretch reads KGPHRSRDTA. An N-linked (GlcNAc...) asparagine glycan is attached at asparagine 289.

It belongs to the GASK family.

The protein localises to the golgi apparatus membrane. The polypeptide is Golgi-associated kinase 1B (Homo sapiens (Human)).